The chain runs to 339 residues: DNA-directed RNA polymerase subunit alpha (339 aa).

The alpha N-terminal domain (alpha-NTD) stretch occupies residues 1 to 233 (MVREEVAGST…DLFLPFLHAE (233 aa)). Residues 266 to 339 (GIPLNCIFID…IDLLKNKLSF (74 aa)) are alpha C-terminal domain (alpha-CTD).

The protein belongs to the RNA polymerase alpha chain family. In plastids the minimal PEP RNA polymerase catalytic core is composed of four subunits: alpha, beta, beta', and beta''. When a (nuclear-encoded) sigma factor is associated with the core the holoenzyme is formed, which can initiate transcription.

Its subcellular location is the plastid. The protein localises to the chloroplast. It carries out the reaction RNA(n) + a ribonucleoside 5'-triphosphate = RNA(n+1) + diphosphate. Functionally, DNA-dependent RNA polymerase catalyzes the transcription of DNA into RNA using the four ribonucleoside triphosphates as substrates. This chain is DNA-directed RNA polymerase subunit alpha, found in Psathyrostachys juncea (Russian wildrye).